The chain runs to 86 residues: Putative regulatory protein BBR47_37350 (86 aa).

The protein belongs to the RemA family.

The polypeptide is Putative regulatory protein BBR47_37350 (Brevibacillus brevis (strain 47 / JCM 6285 / NBRC 100599)).